The chain runs to 577 residues: MNIQALLSEKVRQAMIAAGAPADCEPQVRQSAKVQFGDYQANGMMAVAKKLGMAPRQLAEQVLTHLDLNGIASKVEIAGPGFINIFLDPAFLADHVQQALASDRLDVATPEKQTIVVDYSAPNVAKEMHVGHLRSTIIGDAAVRTLEFLGHKVIRANHVGDWGTQFGMLIAWLEKQQQENAGEMELADLEGFYRDAKKHYDEDEEFAERARNYVVKLQSGDEYFREMWRKLVDITMTQNQITYDRLNVTLTRDDVMGESLYNPMLLGIVADLKAKGLAVESEGATVVFLDEFKNKEGEPMGVIIQKKDGGYLYTTTDIACAKYRYETLHADRVLYYIDSRQHQHLMQAWAIVRKAGYVPESVPLEHHMFGMMLGKDGKPFKTRAGGTVKLADLLDEALERARRLVAEKNPDMPADELEKLANAVGIGAVKYADLSKNRTTDYIFDWDNMLAFEGNTAPYMQYAYTRVLSVFRKAEINEEQLAAAPVIIREDREAQLAARLLQFEETLTVVAREGTPHVMCAYLYDLAGLFSGFYEHCPILSAENEEVRNSRLKLAQLTAKTLKLGLDTLGIETVERM.

Residues 122 to 132 (PNVAKEMHVGH) carry the 'HIGH' region motif.

This sequence belongs to the class-I aminoacyl-tRNA synthetase family. As to quaternary structure, monomer.

Its subcellular location is the cytoplasm. The catalysed reaction is tRNA(Arg) + L-arginine + ATP = L-arginyl-tRNA(Arg) + AMP + diphosphate. This chain is Arginine--tRNA ligase, found in Escherichia coli O139:H28 (strain E24377A / ETEC).